Here is a 160-residue protein sequence, read N- to C-terminus: UPF0260 protein Rleg2_0895 (160 aa).

The protein belongs to the UPF0260 family.

This chain is UPF0260 protein Rleg2_0895, found in Rhizobium leguminosarum bv. trifolii (strain WSM2304).